The following is a 563-amino-acid chain: Arginine--tRNA ligase (563 aa).

A 'HIGH' region motif is present at residues 137-147; sequence ANPTGLLHMGN.

Belongs to the class-I aminoacyl-tRNA synthetase family. As to quaternary structure, monomer.

The protein resides in the cytoplasm. It carries out the reaction tRNA(Arg) + L-arginine + ATP = L-arginyl-tRNA(Arg) + AMP + diphosphate. In Desulforudis audaxviator (strain MP104C), this protein is Arginine--tRNA ligase.